The sequence spans 304 residues: MWFKNLTLYRFNKPFAVETEALETALADFTFSPCSSQDVSKFGFSNALGKKGSSLVHSADNRHLICVTKEEKILPGQVIKEALEEKVALIEDEENRKMAKKEKDALKDEIITSLLPRAFSRRSQTHALILPELEMILVDSSSATKTEELLALLRKALGSLPVIPLSFKAPVESNLTEWLKLGSAPLPFEMQDEAELKSEADEGGIVRFKQQDLKEDEVLAHLATGKQVHKLALHFGQSIALLLQSDASVKRLKFSEEFRAGNDEVGTDDPMARLDADFALMGSELVALMHALVAALGGLEEAQV.

This sequence belongs to the RdgC family.

Its subcellular location is the cytoplasm. It localises to the nucleoid. Functionally, may be involved in recombination. In Shewanella baltica (strain OS195), this protein is Recombination-associated protein RdgC.